Consider the following 162-residue polypeptide: NADH-quinone oxidoreductase subunit I (162 aa).

4Fe-4S ferredoxin-type domains follow at residues 53–83 and 93–122; these read LRRY…IDSA and TRYD…ETHI. Residues C63, C66, C69, C73, C102, C105, C108, and C112 each contribute to the [4Fe-4S] cluster site.

Belongs to the complex I 23 kDa subunit family. NDH-1 is composed of 14 different subunits. Subunits NuoA, H, J, K, L, M, N constitute the membrane sector of the complex. It depends on [4Fe-4S] cluster as a cofactor.

The protein localises to the cell inner membrane. The enzyme catalyses a quinone + NADH + 5 H(+)(in) = a quinol + NAD(+) + 4 H(+)(out). In terms of biological role, NDH-1 shuttles electrons from NADH, via FMN and iron-sulfur (Fe-S) centers, to quinones in the respiratory chain. The immediate electron acceptor for the enzyme in this species is believed to be ubiquinone. Couples the redox reaction to proton translocation (for every two electrons transferred, four hydrogen ions are translocated across the cytoplasmic membrane), and thus conserves the redox energy in a proton gradient. The protein is NADH-quinone oxidoreductase subunit I of Xanthomonas axonopodis pv. citri (strain 306).